The chain runs to 234 residues: Protein CIST1 (234 aa).

The signal sequence occupies residues 1 to 24 (MACPQLPPLLLLVLVVLLKAGVNY). Over 25–180 (NTPFTDIVTS…GPRELHRNPS (156 aa)) the chain is Extracellular. Over residues 41 to 121 (SPVSSLISSP…THPSSGSPSA (81 aa)) the composition is skewed to polar residues. The tract at residues 41–174 (SPVSSLISSP…PAPGDTGPRE (134 aa)) is disordered. Residues 122-140 (ELTPSSHSTLPSSESLTPH) are compositionally biased toward low complexity. Residues 141 to 159 (WSPTSHSPGTEPLTSTDQT) show a composition bias toward polar residues. The chain crosses the membrane as a helical span at residues 181 to 201 (VVVVVCLLVSLLLIGSVVMAV). Residues 202–234 (RFCHRNESKFENLDEVSMGSVNDRLSFAHHLQE) lie on the Cytoplasmic side of the membrane.

Its subcellular location is the membrane. The protein is Protein CIST1 of Homo sapiens (Human).